The following is a 142-amino-acid chain: Hemoglobin subunit alpha (142 aa).

The Globin domain maps to 2–142; it reads VLSANDKSNV…VGNVLTSKYR (141 aa). His59 contacts O2. His88 is a heme b binding site.

The protein belongs to the globin family. As to quaternary structure, heterotetramer of two alpha chains and two beta chains. In terms of tissue distribution, red blood cells.

Involved in oxygen transport from the lung to the various peripheral tissues. This chain is Hemoglobin subunit alpha (HBA), found in Aptenodytes forsteri (Emperor penguin).